A 417-amino-acid chain; its full sequence is Alpha-ionylideneethane synthase aba3 (417 aa).

The protein belongs to the alpha-ionylideneethane synthase family.

Its pathway is hormone biosynthesis. Its function is as follows. Alpha-ionylideneethane synthase; part of the gene cluster that mediates the biosynthesis of abscisic acid (ABA), a phytohormone that acts antagonistically toward salicylic acid (SA), jasmonic acid (JA) and ethylene (ETH) signaling, to impede plant defense responses. The first step of the pathway catalyzes the reaction from farnesyl diphosphate to alpha-ionylideneethane performed by the alpha-ionylideneethane synthase aba3 via a three-step reaction mechanism involving 2 neutral intermediates, beta-farnesene and allofarnesene. The cytochrome P450 monooxygenase aba1 might then be involved in the conversion of alpha-ionylideneethane to alpha-ionylideneacetic acid. Alpha-ionylideneacetic acid is further converted to abscisic acid in 2 steps involving the cytochrome P450 monooxygenase aba2 and the short-chain dehydrogenase/reductase aba4, via the intermediates 1'-deoxy-ABA or 1',4'-trans-diol-ABA, depending on the order of action of these 2 enzymes. Aba2 is responsible for the hydroxylation of carbon atom C-1' and aba4 might be involved in the oxidation of the C-4' carbon atom. The protein is Alpha-ionylideneethane synthase aba3 of Botryotinia fuckeliana (Noble rot fungus).